The chain runs to 302 residues: Nucleotide-binding protein Rsph17025_2562 (302 aa).

15-22 is an ATP binding site; the sequence is GPSGAGRT. GTP is bound at residue 62 to 65; that stretch reads DVRN.

Belongs to the RapZ-like family.

In terms of biological role, displays ATPase and GTPase activities. This Cereibacter sphaeroides (strain ATCC 17025 / ATH 2.4.3) (Rhodobacter sphaeroides) protein is Nucleotide-binding protein Rsph17025_2562.